The following is a 432-amino-acid chain: MGNNVVVLGTQWGDEGKGKIVDLLTERAKYVVRYQGGHNAGHTLVINGEKTVLHLIPSGILRENVTSIIGNGVVLSPAALMKEMKGLEDRGIPVRERLLLSEACPLILDYHVALDNAREKARGAKAIGTTGRGIGPAYEDKVARRGLRVGDLFDKATFAVKLKEVMEYHNFQLVNFYKVEAVDYQKVLDDVMAIADILTSMVVDVSDLLDQARKRGDFVMFEGAQGTLLDIDHGTYPYVTSSNTTAGGVATGSGLGPRYVDYVLGIIKAYSTRVGAGPFPTELFDDTGEFLCKQGNEYGATTGRRRRTGWLDSVAVRRAVQINSLSGFCLTKLDVLDGLEEVKICVAYRMPDGREVTTTPLAADDWEGIEPIYETMPGWSESTFGVKDRSGLPQAALNYIKRIEELTGVPIDIISTGPDRTETMILRDPFDA.

GTP-binding positions include Gly-13–Lys-19 and Gly-41–Thr-43. The active-site Proton acceptor is Asp-14. The Mg(2+) site is built by Asp-14 and Gly-41. IMP contacts are provided by residues Asp-14 to Lys-17, Asn-39 to His-42, Thr-130, Arg-144, Gln-225, Thr-240, and Arg-304. His-42 serves as the catalytic Proton donor. Residue Ala-300–Arg-306 participates in substrate binding. GTP-binding positions include Arg-306, Lys-332–Asp-334, and Ser-415–Gly-417.

This sequence belongs to the adenylosuccinate synthetase family. In terms of assembly, homodimer. Mg(2+) serves as cofactor.

Its subcellular location is the cytoplasm. It catalyses the reaction IMP + L-aspartate + GTP = N(6)-(1,2-dicarboxyethyl)-AMP + GDP + phosphate + 2 H(+). It participates in purine metabolism; AMP biosynthesis via de novo pathway; AMP from IMP: step 1/2. In terms of biological role, plays an important role in the de novo pathway of purine nucleotide biosynthesis. Catalyzes the first committed step in the biosynthesis of AMP from IMP. This chain is Adenylosuccinate synthetase, found in Citrobacter koseri (strain ATCC BAA-895 / CDC 4225-83 / SGSC4696).